We begin with the raw amino-acid sequence, 192 residues long: Bifunctional protein PyrR (192 aa).

Residues 107–119 (VVLVDDVLFSGRT) carry the PRPP-binding motif.

It belongs to the purine/pyrimidine phosphoribosyltransferase family. PyrR subfamily.

It carries out the reaction UMP + diphosphate = 5-phospho-alpha-D-ribose 1-diphosphate + uracil. Regulates the transcription of the pyrimidine nucleotide (pyr) operon in response to exogenous pyrimidines. In terms of biological role, also displays a weak uracil phosphoribosyltransferase activity which is not physiologically significant. This Corynebacterium efficiens (strain DSM 44549 / YS-314 / AJ 12310 / JCM 11189 / NBRC 100395) protein is Bifunctional protein PyrR.